A 354-amino-acid chain; its full sequence is Transcriptional regulator URE2 (354 aa).

Methionine 2 is subject to N-acetylmethionine. The prion domain (PrD) stretch occupies residues 2–89; the sequence is MNNNGNQVSN…TLEQHRQQQQ (88 aa). Positions 22–42 are enriched in polar residues; the sequence is GNRNSNTTTDQSNINFEFSTG. The tract at residues 22-76 is disordered; the sequence is GNRNSNTTTDQSNINFEFSTGVNNNNNNNSSSNNNNVQNNNSGRNGSQNNDNENN. Residues 43–73 show a composition bias toward low complexity; that stretch reads VNNNNNNNSSSNNNNVQNNNSGRNGSQNNDN. The GST N-terminal domain occupies 112–196; it reads EGYTLFSHRS…HLVNKYYKET (85 aa). Glutathione contacts are provided by residues asparagine 124, histidine 151, 164-165, and 180-181; these read RV and ES. The 150-residue stretch at 205–354 folds into the GST C-terminal domain; that stretch reads DLADQSQINA…PAVIKALRGE (150 aa).

It belongs to the GST superfamily. Homodimer. Interacts with NNK1.

It localises to the cytoplasm. The catalysed reaction is 2 glutathione + H2O2 = glutathione disulfide + 2 H2O. Its function is as follows. Plays an important role in nitrogen catabolite repression. Down-regulates the expression of many genes involved in nitrogen utilization by inhibiting the GATA transcriptional activators GLN3 and GAT1. Under good nitrogen conditions, binds to the phosphorylated forms of GLN3 and GAT1 and sequesters them in the cytoplasm, preventing transcription of genes expressed upon nitrogen limitation. Is also an atypical glutaredoxin without a catalytical cysteine residue. Has glutathione peroxidase and thiol:disulfide oxidoreductase activities in both native and fibrillar form. Also shows insulin disulfide reductase and dehydroascorbic acid reductase (DHAR) activities. The polypeptide is Transcriptional regulator URE2 (URE2) (Saccharomyces cerevisiae (strain ATCC 204508 / S288c) (Baker's yeast)).